The primary structure comprises 460 residues: Nucleosome assembly protein 1-like 2 (460 aa).

Positions 1 to 11 are enriched in basic and acidic residues; the sequence is MAESVDHKELS. 2 disordered regions span residues 1 to 87 and 213 to 238; these read MAES…DSDR and DEEEEEEEDDSAGATGGEEVNEEDPK. Positions 213–223 are enriched in acidic residues; sequence DEEEEEEEDDS. The Nuclear localization signal motif lies at 346 to 352; it reads IKKKQRH.

The protein belongs to the nucleosome assembly protein (NAP) family. Brain, specifically expressed in neurons.

It localises to the nucleus. In terms of biological role, acidic protein which may be involved in interactions with other proteins or DNA. The chain is Nucleosome assembly protein 1-like 2 (Nap1l2) from Mus musculus (Mouse).